Here is a 448-residue protein sequence, read N- to C-terminus: DNA repair protein RadA (448 aa).

The C4-type zinc-finger motif lies at 10-27 (CQHCGFTSPKWLGKCVQC). 96 to 103 (GSPGVGKS) is an ATP binding site. The short motif at 253–257 (KNRFG) is the RadA KNRFG motif element. Residues 351 to 448 (DVFINVSGGI…NAVGKIVEWM (98 aa)) form a lon-protease-like region.

This sequence belongs to the RecA family. RadA subfamily.

Functionally, DNA-dependent ATPase involved in processing of recombination intermediates, plays a role in repairing DNA breaks. Stimulates the branch migration of RecA-mediated strand transfer reactions, allowing the 3' invading strand to extend heteroduplex DNA faster. Binds ssDNA in the presence of ADP but not other nucleotides, has ATPase activity that is stimulated by ssDNA and various branched DNA structures, but inhibited by SSB. Does not have RecA's homology-searching function. The protein is DNA repair protein RadA of Helicobacter pylori (strain ATCC 700392 / 26695) (Campylobacter pylori).